A 592-amino-acid polypeptide reads, in one-letter code: MLSLSAKNHFTVSNSITHVIKSYHIRTLTSSAEKMPHITTPFSTSASSTKLKAFRKVRPVLQRHSSSWIVAQNHRRSLSGQSSLNDLRHLNRFPHHTLKTSNNEFYPAEQLTLEDVNENVLKAKYAVRGAIPMRAEELKAQLEKDPQSLPFDRIINANIGNPQQLQQKPLTYYRQVLSLLQYPELLNQNEQQLVDSKLFKLDAIKRAKSLMEDIGGSVGAYSSSQGVEGIRKSVAEFITKRDEGEISYPEDIFLTAGASAAVNYLLSIFCRGPETGVLIPIPQYPLYTATLALNNSQALPYYLDENSGWSTNPEEIETVVKEAIQNEIKPTVLVVINPGNPTGAVLSPESIAQIFEVAAKYGTVVIADEVYQENIFPGTKFHSMKKILRHLQREHPGKFDNVQLASLHSTSKGVSGECGQRGGYMELTGFSHEMRQVILKLASISLCPVVTGQALVDLMVRPPVEGEESFESDQAERNSIHEKLITRAMTLYETFNSLEGIECQKPQGAMYLFPKIDLPFKAVQEARHLELTPDEFYCKKLLESTGICTVPGSGFGQEPGTYHLRTTFLAPGLEWIKKWESFHKEFFDQYRD.

The transit peptide at 1–64 (MLSLSAKNHF…RKVRPVLQRH (64 aa)) directs the protein to the mitochondrion. Serine 77 bears the Phosphoserine mark. Positions 258, 259, 284, 340, and 409 each coordinate pyridoxal 5'-phosphate. Lysine 412 is subject to N6-(pyridoxal phosphate)lysine. A pyridoxal 5'-phosphate-binding site is contributed by arginine 421.

Belongs to the class-I pyridoxal-phosphate-dependent aminotransferase family. Alanine aminotransferase subfamily. In terms of assembly, homodimer. Requires pyridoxal 5'-phosphate as cofactor.

The protein localises to the mitochondrion matrix. The enzyme catalyses L-alanine + 2-oxoglutarate = pyruvate + L-glutamate. It participates in amino-acid degradation; L-alanine degradation via transaminase pathway; pyruvate from L-alanine: step 1/1. Its function is as follows. Alanine aminotransferase involved in both alanine biosynthesis and utilization. Under respiratory conditions, constitutes the sole pathway for alanine biosynthesis and catabolism. Under fermentative conditions, it plays a catabolic role and alanine is mainly synthesized through an alternative pathway. The chain is Alanine aminotransferase, mitochondrial (ALT1) from Saccharomyces cerevisiae (strain ATCC 204508 / S288c) (Baker's yeast).